The sequence spans 801 residues: MSFDDKVLEIPQTLPMLPVRDIVVFPYMIIPLFVGRDASIRSVEEALAKNRLIFLASQKDITEENPSPDNIYTVGTVAMIMRMRKLSDGRVKILIQGVAKGRVKNFTKTSPSFEVAVEKIEETPVQKTVVENEALIRTAKEHIERIIALGRPLSPDILLVLDDVSDPGRIADLIASNLGIKVQDAQKVLETSDATERLKLVNEILAAELEVMQTQSKNRTGAKDDMSKSQREYFLREQMKAIKNELGEGDSKSEEMDELREKLVNAGMPTHVEAEALKQLGRLERMHPDASEATMVRTYLDWMADLPWSKKSEDHIDLKRSKEILDEDHYELEKAKDRIMEFLAVRKLKPNLKGPILCFGGPPGVGKTSLGKSIARAMGREYFRIALGGVKDEAEIRGHRRTYVGAMPGKIIQALRQAKTSNPVIVLDEIDKLGSDFRGDPSAAMLEVLDPEQNATFRDNYLNVDFDLSNVLFIATANVLENIPPALRDRMEILNIPGYTENDKLLITKKHLIKRQIEANGITEENIKFTDEGIKYLIAGYTREAGLRNLEREVGSVCRKVAKMVVMEETNFVEVNATTVPELLGPPRFQRDDKIADSQVGVVQGLAWTQAGGEVLTIEALKMKGKGHLALTGQLGDVMKESAHAAMSYARAHQEELGIPEDFFEKYDVHVHLPAGAIPKDGPSAGITLTTALVSLMTGTPVRHDIAMTGEVTLQGRVLPVGGIREKCLAALNLGITNIIIPMACQKDLADIPKVFKDKINFILAENLDEVFAVAFDKSAKGQEKKPAAKKDPKKTKSLAA.

The region spanning 14–209 (LPMLPVRDIV…LVNEILAAEL (196 aa)) is the Lon N-terminal domain. 361 to 368 (GPPGVGKT) provides a ligand contact to ATP. The region spanning 597–778 (DSQVGVVQGL…DEVFAVAFDK (182 aa)) is the Lon proteolytic domain. Residues Ser684 and Lys727 contribute to the active site. Residues 780–791 (AKGQEKKPAAKK) are compositionally biased toward basic and acidic residues. Residues 780-801 (AKGQEKKPAAKKDPKKTKSLAA) form a disordered region. The segment covering 792 to 801 (DPKKTKSLAA) has biased composition (basic residues).

The protein belongs to the peptidase S16 family. In terms of assembly, homohexamer. Organized in a ring with a central cavity.

The protein resides in the cytoplasm. It catalyses the reaction Hydrolysis of proteins in presence of ATP.. Its function is as follows. ATP-dependent serine protease that mediates the selective degradation of mutant and abnormal proteins as well as certain short-lived regulatory proteins. Required for cellular homeostasis and for survival from DNA damage and developmental changes induced by stress. Degrades polypeptides processively to yield small peptide fragments that are 5 to 10 amino acids long. Binds to DNA in a double-stranded, site-specific manner. The polypeptide is Lon protease 2 (Bdellovibrio bacteriovorus (strain ATCC 15356 / DSM 50701 / NCIMB 9529 / HD100)).